A 275-amino-acid chain; its full sequence is Dihydroxyacetone phosphatase (275 aa).

D10 acts as the Nucleophile in catalysis. D10, D12, and D206 together coordinate Mg(2+). Catalysis depends on D12, which acts as the Proton donor/acceptor.

Belongs to the HAD-like hydrolase superfamily. As to quaternary structure, homohexamer. Requires Mg(2+) as cofactor.

The enzyme catalyses dihydroxyacetone phosphate + H2O = dihydroxyacetone + phosphate. Functionally, catalyzes dephosphorylation of dihydroxyacetone phosphate (DHAP) to produce 1,3-dihydroxyacetone (DHA). Is the main enzyme responsible for DHA production from catabolism of sugars (glucose, fructose, and sucrose) in C.glutamicum. Displays no activity toward nucleoside monophosphates (AMP, CMP, GMP, or UMP). The polypeptide is Dihydroxyacetone phosphatase (Corynebacterium glutamicum (strain R)).